The primary structure comprises 778 residues: Endonuclease MutS2 (778 aa).

ATP is bound at residue 328 to 335; that stretch reads GPNTGGKT. The 76-residue stretch at 702 to 777 folds into the Smr domain; the sequence is LDLRGKRYEE…GSGATIVTFK (76 aa).

Belongs to the DNA mismatch repair MutS family. MutS2 subfamily. In terms of assembly, homodimer. Binds to stalled ribosomes, contacting rRNA.

Functionally, endonuclease that is involved in the suppression of homologous recombination and thus may have a key role in the control of bacterial genetic diversity. Its function is as follows. Acts as a ribosome collision sensor, splitting the ribosome into its 2 subunits. Detects stalled/collided 70S ribosomes which it binds and splits by an ATP-hydrolysis driven conformational change. Acts upstream of the ribosome quality control system (RQC), a ribosome-associated complex that mediates the extraction of incompletely synthesized nascent chains from stalled ribosomes and their subsequent degradation. Probably generates substrates for RQC. The polypeptide is Endonuclease MutS2 (Streptococcus pneumoniae (strain P1031)).